The primary structure comprises 276 residues: NADPH-dependent 7-cyano-7-deazaguanine reductase (276 aa).

A substrate-binding site is contributed by 83-85 (IES). 85-86 (SK) contacts NADPH. Cys184 (thioimide intermediate) is an active-site residue. The active-site Proton donor is the Asp191. 223-224 (HE) contributes to the substrate binding site. 252 to 253 (RG) is an NADPH binding site.

It belongs to the GTP cyclohydrolase I family. QueF type 2 subfamily. As to quaternary structure, homodimer.

It localises to the cytoplasm. It carries out the reaction 7-aminomethyl-7-carbaguanine + 2 NADP(+) = 7-cyano-7-deazaguanine + 2 NADPH + 3 H(+). It functions in the pathway tRNA modification; tRNA-queuosine biosynthesis. In terms of biological role, catalyzes the NADPH-dependent reduction of 7-cyano-7-deazaguanine (preQ0) to 7-aminomethyl-7-deazaguanine (preQ1). The protein is NADPH-dependent 7-cyano-7-deazaguanine reductase of Pseudomonas syringae pv. syringae (strain B728a).